Here is a 596-residue protein sequence, read N- to C-terminus: MRYKPLLLALMLVFSTPAVAAHDAAHNRSAEVKKQTKNKKEQPEAAEGKKEKGKNGAVKDKKTGGKEAAKEGKESKKTAKNRKEAEKEATSRQSARKGREGDKKSKAEHKKAHGKPVSGSKEKNAKTQPENKQGKKEAKGQGNPRKGGKAEKDTVSANKKVRSDKNGKAVKQDKKYREEKNAKTDSDELKAAVAAATNDVENKKALLKQSEGMLLHVSNSLKQLQEERIRQERIRQARGNLASVNRKQREAWDKFQKLNTELNRLKTEVAATKAQISRFVSGNYKNSQPNAVALFLKNAEPGQKNRFLRYTRYVNASNREVVKDLEKQQKALAVQEQKINNELARLKKIQANVQSLLKKQGVTDAAEQTESRRQNAKIAKDARKLLEQKGNEQQLNKLLSNLEKKKAEHRIQDAEAKRKLAEARLAAAEKARKEAAQQKAEARRAEMSNLTAEDRNIQAPSVMGIGSADGFSRMQGRLKKPVDGVPTGLFGQNRSGGDIWKGVFYSTAPATVESIAPGTVSYADELDGYGKVVVVDHGENYISIYAGLSEISVGKGYMVAAGSKIGSSGSLPDGEEGLYLQIRYQGQVLNPSSWIR.

The first 20 residues, 1–20 (MRYKPLLLALMLVFSTPAVA), serve as a signal peptide directing secretion. Basic and acidic residues-rich tracts occupy residues 25–90 (AHNR…KEAT) and 161–184 (VRSD…NAKT). Residues 25–184 (AHNRSAEVKK…KYREEKNAKT (160 aa)) are disordered. 2 coiled-coil regions span residues 177–281 (REEK…RFVS) and 318–454 (NREV…TAED).

It belongs to the peptidase M23B family.

This is an uncharacterized protein from Neisseria meningitidis serogroup B (strain ATCC BAA-335 / MC58).